The following is a 170-amino-acid chain: ATP synthase subunit b (170 aa).

A helical membrane pass occupies residues 15 to 37; it reads GDILFQLLAMLILLALLKKYALG.

This sequence belongs to the ATPase B chain family. F-type ATPases have 2 components, F(1) - the catalytic core - and F(0) - the membrane proton channel. F(1) has five subunits: alpha(3), beta(3), gamma(1), delta(1), epsilon(1). F(0) has three main subunits: a(1), b(2) and c(10-14). The alpha and beta chains form an alternating ring which encloses part of the gamma chain. F(1) is attached to F(0) by a central stalk formed by the gamma and epsilon chains, while a peripheral stalk is formed by the delta and b chains. The F(1)F(0) complex interacts with SpoIIIJ and YqjG; YqgA is found in the same complex.

Its subcellular location is the cell membrane. F(1)F(0) ATP synthase produces ATP from ADP in the presence of a proton or sodium gradient. F-type ATPases consist of two structural domains, F(1) containing the extramembraneous catalytic core and F(0) containing the membrane proton channel, linked together by a central stalk and a peripheral stalk. During catalysis, ATP synthesis in the catalytic domain of F(1) is coupled via a rotary mechanism of the central stalk subunits to proton translocation. Its function is as follows. Component of the F(0) channel, it forms part of the peripheral stalk, linking F(1) to F(0). This chain is ATP synthase subunit b, found in Bacillus subtilis (strain 168).